The following is a 191-amino-acid chain: uncharacterized protein (191 aa).

The 61-residue stretch at 6–66 (GLTQKMIVDA…ELAVRGLTKL (61 aa)) folds into the HTH tetR-type domain. Residues 29-48 (SLAALSKKMNVRPPSLYNHI) constitute a DNA-binding region (H-T-H motif).

This is an uncharacterized protein from Bacillus subtilis (strain 168).